Consider the following 196-residue polypeptide: Ribonuclease S-F11 (196 aa).

The cysteines at positions 16 and 21 are disulfide-linked. An N-linked (GlcNAc...) asparagine glycan is attached at asparagine 28. Catalysis depends on histidine 32, which acts as the Proton donor. RNA is bound by residues histidine 32 and 69-70 (QL). 3 disulfides stabilise this stretch: cysteine 46–cysteine 94, cysteine 153–cysteine 186, and cysteine 169–cysteine 180. The active site involves glutamine 87. 90-91 (KH) serves as a coordination point for RNA. Histidine 91 functions as the Proton acceptor in the catalytic mechanism.

Belongs to the RNase T2 family. In terms of assembly, monomer.

The protein resides in the secreted. It localises to the extracellular space. It carries out the reaction a ribonucleotidyl-ribonucleotide-RNA + H2O = a 3'-end 3'-phospho-ribonucleotide-RNA + a 5'-end dephospho-ribonucleoside-RNA + H(+). In terms of biological role, self-incompatibility (SI) is the inherited ability of a flowering plant to prevent self-fertilization by discriminating between self and non-self pollen during pollination. In many species of the Solanaceae, self-incompatibility is controlled by the single, multiallelic locus S. The polypeptide is Ribonuclease S-F11 (Nicotiana alata (Winged tobacco)).